Consider the following 583-residue polypeptide: Protein NRT1/ PTR FAMILY 5.1 (583 aa).

A helical transmembrane segment spans residues 74–94; that stretch reads WSGAVWITPIAGAYIADSYIG. Thr-98 carries the phosphothreonine modification. Helical transmembrane passes span 99–119, 134–154, 182–202, 210–230, 320–340, 361–381, 405–425, 446–466, 485–505, and 529–549; these read FTAS…AVTV, ASSL…IGAG, FFNW…LGLV, WGLG…VFYI, VLGL…WAQV, IPAA…VPMY, LGVG…VEVK, IFWL…NAIG, TFFT…VTMI, and YYYG…VWAA.

This sequence belongs to the major facilitator superfamily. Proton-dependent oligopeptide transporter (POT/PTR) (TC 2.A.17) family. In terms of tissue distribution, expressed in flowers. Detected in stems, leaves and siliques.

Its subcellular location is the membrane. The sequence is that of Protein NRT1/ PTR FAMILY 5.1 (NPF5.1) from Arabidopsis thaliana (Mouse-ear cress).